A 532-amino-acid chain; its full sequence is CTP synthase (532 aa).

The segment at 1-267 is amidoligase domain; the sequence is MAKFIFVTGG…QDIIIEQLQL (267 aa). Serine 13 contacts CTP. Serine 13 contacts UTP. An ATP-binding site is contributed by 14 to 19; that stretch reads GLGKGI. L-glutamine is bound at residue tyrosine 54. Residue aspartate 71 participates in ATP binding. Aspartate 71 and glutamate 141 together coordinate Mg(2+). CTP-binding positions include 148 to 150, 188 to 193, and lysine 224; these read DIE and KTKPIQ. Residues 188–193 and lysine 224 contribute to the UTP site; that span reads KTKPIQ. One can recognise a Glutamine amidotransferase type-1 domain in the interval 292 to 532; that stretch reads EISFVGKYIE…FIKAIVENNK (241 aa). Glycine 354 provides a ligand contact to L-glutamine. The Nucleophile; for glutamine hydrolysis role is filled by cysteine 381. L-glutamine-binding positions include 382–385, glutamate 405, and arginine 461; that span reads LGMQ. Residues histidine 506 and glutamate 508 contribute to the active site.

The protein belongs to the CTP synthase family. In terms of assembly, homotetramer.

The catalysed reaction is UTP + L-glutamine + ATP + H2O = CTP + L-glutamate + ADP + phosphate + 2 H(+). The enzyme catalyses L-glutamine + H2O = L-glutamate + NH4(+). It carries out the reaction UTP + NH4(+) + ATP = CTP + ADP + phosphate + 2 H(+). The protein operates within pyrimidine metabolism; CTP biosynthesis via de novo pathway; CTP from UDP: step 2/2. Its activity is regulated as follows. Allosterically activated by GTP, when glutamine is the substrate; GTP has no effect on the reaction when ammonia is the substrate. The allosteric effector GTP functions by stabilizing the protein conformation that binds the tetrahedral intermediate(s) formed during glutamine hydrolysis. Inhibited by the product CTP, via allosteric rather than competitive inhibition. In terms of biological role, catalyzes the ATP-dependent amination of UTP to CTP with either L-glutamine or ammonia as the source of nitrogen. Regulates intracellular CTP levels through interactions with the four ribonucleotide triphosphates. This Mycoplasma mycoides subsp. mycoides SC (strain CCUG 32753 / NCTC 10114 / PG1) protein is CTP synthase.